The chain runs to 2273 residues: Acetyl-CoA carboxylase, mitochondrial (2273 aa).

The transit peptide at 1-104 directs the protein to the mitochondrion; it reads KGKTITHGQS…RGNIHKHTRL (104 aa). The region spanning 134-635 is the Biotin carboxylation domain; the sequence is VISKILIANN…STGWLDDLIL (502 aa). One can recognise an ATP-grasp domain in the interval 292–484; that stretch reads KTNFVSVPDD…LPATQLQIAM (193 aa). 332-337 is a binding site for ATP; the sequence is GGGGKG. Arg-459 is a catalytic residue. A Biotinyl-binding domain is found at 763 to 837; sequence LEAELNPTQV…EAGDVIAKLT (75 aa). Residue Lys-804 is modified to N6-biotinyllysine. A CoA carboxyltransferase N-terminal domain is found at 1532-1867; that stretch reads PYSVKDWLQP…KRDMSPPLLE (336 aa). Residues 1532-2187 are carboxyltransferase; the sequence is PYSVKDWLQP…EGQVIKRLQK (656 aa). Arg-1776, Lys-2080, and Arg-2082 together coordinate CoA. A CoA carboxyltransferase C-terminal domain is found at 1871–2187; that stretch reads RWDRDVDFKP…EGQVIKRLQK (317 aa).

Requires biotin as cofactor.

It is found in the mitochondrion. It carries out the reaction hydrogencarbonate + acetyl-CoA + ATP = malonyl-CoA + ADP + phosphate + H(+). It catalyses the reaction N(6)-biotinyl-L-lysyl-[protein] + hydrogencarbonate + ATP = N(6)-carboxybiotinyl-L-lysyl-[protein] + ADP + phosphate + H(+). The protein operates within lipid metabolism; malonyl-CoA biosynthesis; malonyl-CoA from acetyl-CoA: step 1/1. Its function is as follows. Catalyzes the rate-limiting reaction in the mitochondrial fatty acid synthesis (FAS) type II pathway. Responsible for the production of the mitochondrial malonyl-CoA, used for the biosynthesis of the cofactor lipoic acid. This protein carries three functions: biotin carboxyl carrier protein, biotin carboxylase, and carboxyltransferase. This is Acetyl-CoA carboxylase, mitochondrial (HFA1) from Saccharomyces cerevisiae (strain ATCC 204508 / S288c) (Baker's yeast).